Consider the following 131-residue polypeptide: Snaclec alboaggregin-A subunit alpha (131 aa).

Residues D1–R131 enclose the C-type lectin domain. Cystine bridges form between C2–C13, C30–C127, and C102–C119.

It belongs to the snaclec family. As to quaternary structure, heterotetramer of the subunits alpha, alpha', beta and beta'; disulfide-linked. In terms of tissue distribution, expressed by the venom gland.

It localises to the secreted. In terms of biological role, potent platelet activator that aggregates platelets via both GPIbalpha (GP1BA) and GPVI (GP6). Induces a tyrosine phosphorylation profile in platelets that resembles this produced by collagen, involving the time dependent tyrosine phosphorylation of Fc receptor gamma chain (FCGR1A), phospholipase Cgamma2 (PLCG2), and LAT. The sequence is that of Snaclec alboaggregin-A subunit alpha from Trimeresurus albolabris (White-lipped pit viper).